Here is a 204-residue protein sequence, read N- to C-terminus: Recombination protein RecR (204 aa).

The C4-type zinc-finger motif lies at 57–72 (CPTCFNYTDTDICRYC). Residues 80–181 (ESICVVEEPS…KLSRIAHGVP (102 aa)) enclose the Toprim domain.

It belongs to the RecR family.

In terms of biological role, may play a role in DNA repair. It seems to be involved in an RecBC-independent recombinational process of DNA repair. It may act with RecF and RecO. The polypeptide is Recombination protein RecR (Bdellovibrio bacteriovorus (strain ATCC 15356 / DSM 50701 / NCIMB 9529 / HD100)).